The sequence spans 409 residues: Glycogenin (409 aa).

UDP is bound by residues L8, Y14, and R80. Positions 8, 14, 80, 89, 105, 107, 140, 141, 169, 172, and 173 each coordinate UDP-alpha-D-glucose. UDP contacts are provided by D105 and D107. Mn(2+) is bound by residues D105 and D107. Y212 carries an O-linked (Glc...) tyrosine glycan. H229, G232, and K235 together coordinate UDP. H229 serves as a coordination point for Mn(2+). UDP-alpha-D-glucose-binding residues include G232 and K235. The tract at residues 283 to 303 (RIEEDSHETEEKVDEEVSISE) is disordered.

The protein belongs to the glycosyltransferase 8 family. Glycogenin subfamily. The cofactor is Mn(2+).

Its subcellular location is the cytoplasm. The protein localises to the vacuole. It catalyses the reaction L-tyrosyl-[glycogenin] + UDP-alpha-D-glucose = alpha-D-glucosyl-L-tyrosyl-[glycogenin] + UDP + H(+). The enzyme catalyses [1,4-alpha-D-glucosyl](n)-L-tyrosyl-[glycogenin] + UDP-alpha-D-glucose = [1,4-alpha-D-glucosyl](n+1)-L-tyrosyl-[glycogenin] + UDP + H(+). Glycogenin participates in the glycogen biosynthetic process along with glycogen synthase and glycogen branching enzyme. It catalyzes the formation of a short alpha (1,4)-glucosyl chain covalently attached via a glucose 1-O-tyrosyl linkage to internal tyrosine residues and these chains act as primers for the elongation reaction catalyzed by glycogen synthase. The sequence is that of Glycogenin from Komagataella phaffii (strain GS115 / ATCC 20864) (Yeast).